The primary structure comprises 386 residues: ATP synthase subunit a (386 aa).

The next 4 membrane-spanning stretches (helical) occupy residues 150–170 (FTNE…LFFV), 243–263 (HFLI…IVGF), 270–290 (FFSF…LVLL), and 310–330 (MMAG…MLFL).

Belongs to the ATPase A chain family. As to quaternary structure, F-type ATPases have 2 components, CF(1) - the catalytic core - and CF(0) - the membrane proton channel. CF(1) has five subunits: alpha(3), beta(3), gamma(1), delta(1), epsilon(1). CF(0) has three main subunits: a, b and c.

The protein resides in the mitochondrion inner membrane. In terms of biological role, mitochondrial membrane ATP synthase (F(1)F(0) ATP synthase or Complex V) produces ATP from ADP in the presence of a proton gradient across the membrane which is generated by electron transport complexes of the respiratory chain. F-type ATPases consist of two structural domains, F(1) - containing the extramembraneous catalytic core and F(0) - containing the membrane proton channel, linked together by a central stalk and a peripheral stalk. During catalysis, ATP synthesis in the catalytic domain of F(1) is coupled via a rotary mechanism of the central stalk subunits to proton translocation. Key component of the proton channel; it may play a direct role in the translocation of protons across the membrane. The sequence is that of ATP synthase subunit a (ATP6) from Triticum aestivum (Wheat).